The chain runs to 605 residues: F-box/WD repeat-containing protein pof1 (605 aa).

An F-box domain is found at 107–153 (LDFLSLLPVEISFRILSFLDARSLCQAAQVSKHWKELADDDVIWHRM). The span at 195–212 (GVDQAHESSPVKKAKLDD) shows a compositional bias: basic and acidic residues. A disordered region spans residues 195 to 231 (GVDQAHESSPVKKAKLDDYPTSSNEETISSVKPPSPN). Over residues 214–231 (PTSSNEETISSVKPPSPN) the composition is skewed to polar residues. 2 positions are modified to phosphoserine: S229 and S232. 7 WD repeats span residues 271-299 (GHSD…RLWN), 311-339 (GHSS…RIWN), 350-379 (HGHT…KLWH), 390-420 (GHTG…KIWS), 432-460 (AHIG…KQWD), 472-500 (GHIE…KVWE), and 510-538 (NHSE…YLWL).

As to quaternary structure, a part of the E3 ubiquitin ligase Skp1-Cullin-1-F-box (SCF) complex. Interacts with cul1, skp1 and phosphorylated zip1.

The protein resides in the nucleus. Its function is as follows. Probably recognizes and binds to some phosphorylated proteins and promotes their ubiquitination and degradation. Required for the inactivation of zip1 via ubiquitination. The protein is F-box/WD repeat-containing protein pof1 (pof1) of Schizosaccharomyces pombe (strain 972 / ATCC 24843) (Fission yeast).